The primary structure comprises 121 residues: Large ribosomal subunit protein uL14 (121 aa).

It belongs to the universal ribosomal protein uL14 family. In terms of assembly, part of the 50S ribosomal subunit. Forms a cluster with proteins L3 and L19. In the 70S ribosome, L14 and L19 interact and together make contacts with the 16S rRNA in bridges B5 and B8.

Binds to 23S rRNA. Forms part of two intersubunit bridges in the 70S ribosome. This Synechococcus sp. (strain WH7803) protein is Large ribosomal subunit protein uL14.